Consider the following 384-residue polypeptide: Mannitol-1-phosphate 5-dehydrogenase (384 aa).

3–14 (AVHFGAGNIGRG) provides a ligand contact to NAD(+).

Belongs to the mannitol dehydrogenase family. As to quaternary structure, monomer.

The enzyme catalyses D-mannitol 1-phosphate + NAD(+) = beta-D-fructose 6-phosphate + NADH + H(+). This Enterococcus faecalis (strain ATCC 700802 / V583) protein is Mannitol-1-phosphate 5-dehydrogenase (mtlD).